The chain runs to 477 residues: Glycogen synthase (477 aa).

Lysine 15 serves as a coordination point for ADP-alpha-D-glucose.

Belongs to the glycosyltransferase 1 family. Bacterial/plant glycogen synthase subfamily.

It carries out the reaction [(1-&gt;4)-alpha-D-glucosyl](n) + ADP-alpha-D-glucose = [(1-&gt;4)-alpha-D-glucosyl](n+1) + ADP + H(+). It participates in glycan biosynthesis; glycogen biosynthesis. Its function is as follows. Synthesizes alpha-1,4-glucan chains using ADP-glucose. The polypeptide is Glycogen synthase (Shigella boydii serotype 18 (strain CDC 3083-94 / BS512)).